The following is a 140-amino-acid chain: Thymic stromal lymphopoietin (140 aa).

The N-terminal stretch at 1 to 19 is a signal peptide; it reads MVLLRSLFILQVLVRMGLT. N-linked (GlcNAc...) asparagine glycans are attached at residues asparagine 21 and asparagine 26. 3 disulfides stabilise this stretch: cysteine 25/cysteine 98, cysteine 57/cysteine 63, and cysteine 78/cysteine 121. N-linked (GlcNAc...) asparagine glycosylation is present at asparagine 123.

In terms of assembly, interacts with a receptor composed of CRLF2 and IL7R. Binding of TSLP to CRLF2/TSLPR is a mechanistic prerequisite for recruitment of IL7R to the high-affinity ternary complex.

It localises to the secreted. In terms of biological role, cytokine that induces the release of T-cell-attracting chemokines from monocytes and, in particular, enhances the maturation of CD11c(+) dendritic cells. Can induce allergic inflammation by directly activating mast cells. In Mus musculus (Mouse), this protein is Thymic stromal lymphopoietin (Tslp).